The sequence spans 48 residues: ATP synthase protein 8 (48 aa).

Residues 13-35 form a helical membrane-spanning segment; the sequence is LTYGFTFILTILFLTSYVFLPMI.

Belongs to the ATPase protein 8 family. F-type ATPases have 2 components, CF(1) - the catalytic core - and CF(0) - the membrane proton channel. In yeast, the dimeric form of ATP synthase consists of 18 polypeptides: alpha, beta, gamma, delta, epsilon, 4 (B), 5 (OSCP), 6 (A), 8, 9 (C), d, E (Tim11), f, g, h, i, j and k.

The protein localises to the mitochondrion membrane. In terms of biological role, mitochondrial membrane ATP synthase (F(1)F(0) ATP synthase or Complex V) produces ATP from ADP in the presence of a proton gradient across the membrane which is generated by electron transport complexes of the respiratory chain. F-type ATPases consist of two structural domains, F(1) - containing the extramembraneous catalytic core and F(0) - containing the membrane proton channel, linked together by a central stalk and a peripheral stalk. During catalysis, ATP synthesis in the catalytic domain of F(1) is coupled via a rotary mechanism of the central stalk subunits to proton translocation. Part of the complex F(0) domain. Minor subunit located with subunit a in the membrane. This chain is ATP synthase protein 8 (ATP8), found in Eremothecium gossypii (strain ATCC 10895 / CBS 109.51 / FGSC 9923 / NRRL Y-1056) (Yeast).